Reading from the N-terminus, the 404-residue chain is uncharacterized protein (404 aa).

8 helical membrane-spanning segments follow: residues 1 to 21, 32 to 52, 89 to 109, 182 to 202, 261 to 281, 285 to 305, 344 to 364, and 384 to 404; these read MNVL…FLFS, VIVG…WEAG, AFAL…AVLY, LFGY…SFMA, LAFV…FGLF, GVTL…LIGV, ATII…AIML, and KAVL…GMFI.

It belongs to the concentrative nucleoside transporter (CNT) (TC 2.A.41) family.

The protein localises to the cell membrane. This is an uncharacterized protein from Bacillus subtilis (strain 168).